Here is a 373-residue protein sequence, read N- to C-terminus: 3 beta-hydroxysteroid dehydrogenase/Delta 5--&gt;4-isomerase (373 aa).

The Proton acceptor role is filled by Tyr155. Residue Lys159 coordinates NAD(+). The chain crosses the membrane as a helical span at residues 288-308; that stretch reads ISLQYWLAFLLEIVSFLLSPI.

This sequence belongs to the 3-beta-HSD family.

The protein localises to the endoplasmic reticulum membrane. It is found in the mitochondrion membrane. The enzyme catalyses a 3beta-hydroxy-Delta(5)-steroid + NAD(+) = a 3-oxo-Delta(5)-steroid + NADH + H(+). It carries out the reaction a 3-oxo-Delta(5)-steroid = a 3-oxo-Delta(4)-steroid. It functions in the pathway lipid metabolism; steroid biosynthesis. 3-beta-HSD is a bifunctional enzyme, that catalyzes the oxidative conversion of Delta(5)-ene-3-beta-hydroxy steroid, and the oxidative conversion of ketosteroids. The 3-beta-HSD enzymatic system plays a crucial role in the biosynthesis of all classes of hormonal steroids. The protein is 3 beta-hydroxysteroid dehydrogenase/Delta 5--&gt;4-isomerase (HSD3B) of Bos taurus (Bovine).